The sequence spans 267 residues: Indole-3-glycerol phosphate synthase (267 aa).

Belongs to the TrpC family.

The catalysed reaction is 1-(2-carboxyphenylamino)-1-deoxy-D-ribulose 5-phosphate + H(+) = (1S,2R)-1-C-(indol-3-yl)glycerol 3-phosphate + CO2 + H2O. The protein operates within amino-acid biosynthesis; L-tryptophan biosynthesis; L-tryptophan from chorismate: step 4/5. The sequence is that of Indole-3-glycerol phosphate synthase from Delftia acidovorans (strain DSM 14801 / SPH-1).